The sequence spans 641 residues: Tetracycline resistance protein TetQ (641 aa).

One can recognise a tr-type G domain in the interval 1-244; sequence MNIINLGILA…AITSFILPPA (244 aa). GTP is bound by residues 10 to 17, 74 to 78, and 128 to 131; these read AHIDAGKT, DTPGH, and NKID.

The protein belongs to the TRAFAC class translation factor GTPase superfamily. Classic translation factor GTPase family. TetM/TetO subfamily.

In terms of biological role, abolishes the inhibitory effect of tetracyclin on protein synthesis by a non-covalent modification of the ribosomes. The chain is Tetracycline resistance protein TetQ (tetQ) from Bacteroides thetaiotaomicron.